Here is a 327-residue protein sequence, read N- to C-terminus: NADPH-dependent aldose reductase GRE3 (327 aa).

The Proton donor role is filled by Tyr-49. His-111 serves as a coordination point for substrate. 219–286 (SSFGPQSFIE…SSKKERLLGN (68 aa)) lines the NADP(+) pocket.

This sequence belongs to the aldo/keto reductase family. In terms of assembly, monomer.

The protein localises to the cytoplasm. Its subcellular location is the nucleus. The catalysed reaction is an alditol + NAD(+) = an aldose + NADH + H(+). It carries out the reaction an alditol + NADP(+) = an aldose + NADPH + H(+). Functionally, aldose reductase with a broad substrate specificity. Reduces the cytotoxic compound methylglyoxal (MG) to acetol and (R)-lactaldehyde under stress conditions. MG is synthesized via a bypath of glycolysis from dihydroxyacetone phosphate and is believed to play a role in cell cycle regulation and stress adaptation. In pentose-fermenting yeasts, aldose reductase catalyzes the reduction of xylose into xylitol. The purified enzyme catalyzes this reaction, but the inability of S.cerevisiae to grow on xylose as sole carbon source indicates that the physiological function is more likely methylglyoxal reduction. The chain is NADPH-dependent aldose reductase GRE3 from Saccharomyces cerevisiae (strain ATCC 204508 / S288c) (Baker's yeast).